The sequence spans 429 residues: Glutamate-1-semialdehyde 2,1-aminomutase (429 aa).

Lys-267 carries the N6-(pyridoxal phosphate)lysine modification.

It belongs to the class-III pyridoxal-phosphate-dependent aminotransferase family. HemL subfamily. Homodimer. The cofactor is pyridoxal 5'-phosphate.

It is found in the cytoplasm. It catalyses the reaction (S)-4-amino-5-oxopentanoate = 5-aminolevulinate. Its pathway is porphyrin-containing compound metabolism; protoporphyrin-IX biosynthesis; 5-aminolevulinate from L-glutamyl-tRNA(Glu): step 2/2. This Anaeromyxobacter sp. (strain Fw109-5) protein is Glutamate-1-semialdehyde 2,1-aminomutase.